The primary structure comprises 194 residues: Large ribosomal subunit protein eL15 (194 aa).

Residues 168 to 194 (RSRGLLNKGKGAEKVRPSIRAHQGKGK) are disordered. The segment covering 184-194 (PSIRAHQGKGK) has biased composition (basic residues).

This sequence belongs to the eukaryotic ribosomal protein eL15 family. Part of the 50S ribosomal subunit.

This chain is Large ribosomal subunit protein eL15, found in Thermococcus kodakarensis (strain ATCC BAA-918 / JCM 12380 / KOD1) (Pyrococcus kodakaraensis (strain KOD1)).